Here is a 364-residue protein sequence, read N- to C-terminus: MTIYNFSAGPATLPKPVLEKAQAELLNYQDSGMSVLEMSHRSPEFDKIIKDAEATLRELMAIPDNYKVIFLQGGASTQFTMVPLNLAQGKKAYYLVGGSWGKKAYTEAVKLSKTIPFEPILLASSEDTVYDHIPSFDPSTIDPEAAYVHLTTNNTIEGTSIYDLPDTNGVPIVADMSSNILAARYNVEDFALIYAGAQKNIGPAGVTVVIVREDFLNDQPQLSAMLDYRIQAEAGSLYNTPPCFNIYISKLVFDWVKNEIGGVDKMAEIQREKSGLLYDYIESSDFYTNPVKDAKDRSVCNIPFVTPSKDLDAKFVAEADALGFKNIKGHRSVGGMRASVYNAFPRQGVLDLIDFMKKFEDENK.

Residue Arg41 participates in L-glutamate binding. Pyridoxal 5'-phosphate-binding positions include 75–76 (AS), Trp100, Thr155, Asp175, and Gln198. At Lys199 the chain carries N6-(pyridoxal phosphate)lysine. 239–240 (NT) lines the pyridoxal 5'-phosphate pocket.

This sequence belongs to the class-V pyridoxal-phosphate-dependent aminotransferase family. SerC subfamily. Homodimer. Pyridoxal 5'-phosphate serves as cofactor.

It localises to the cytoplasm. It catalyses the reaction O-phospho-L-serine + 2-oxoglutarate = 3-phosphooxypyruvate + L-glutamate. It carries out the reaction 4-(phosphooxy)-L-threonine + 2-oxoglutarate = (R)-3-hydroxy-2-oxo-4-phosphooxybutanoate + L-glutamate. The protein operates within amino-acid biosynthesis; L-serine biosynthesis; L-serine from 3-phospho-D-glycerate: step 2/3. Functionally, catalyzes the reversible conversion of 3-phosphohydroxypyruvate to phosphoserine and of 3-hydroxy-2-oxo-4-phosphonooxybutanoate to phosphohydroxythreonine. The sequence is that of Phosphoserine aminotransferase from Streptococcus thermophilus (strain CNRZ 1066).